Here is a 536-residue protein sequence, read N- to C-terminus: Heparanase-like protein 3 (536 aa).

An N-terminal signal peptide occupies residues 1-24 (MAYRQILAIVLFLCVFQFLDCTVS). 4 N-linked (GlcNAc...) asparagine glycosylation sites follow: Asn30, Asn122, Asn176, and Asn191. The Proton donor role is filled by Glu202. N-linked (GlcNAc...) asparagine glycans are attached at residues Asn265 and Asn308. Glu319 functions as the Nucleophile in the catalytic mechanism. N-linked (GlcNAc...) asparagine glycans are attached at residues Asn370, Asn427, Asn438, and Asn510.

The protein belongs to the glycosyl hydrolase 79 family.

It localises to the lysosome membrane. The protein resides in the secreted. Functionally, endoglycosidase which is a cell surface and extracellular matrix-degrading enzyme. Cleaves heparan sulfate proteoglycans (HSPGs) into heparan sulfate side chains and core proteoglycans. The protein is Heparanase-like protein 3 of Arabidopsis thaliana (Mouse-ear cress).